Consider the following 264-residue polypeptide: Formamidopyrimidine-DNA glycosylase (264 aa).

Pro2 acts as the Schiff-base intermediate with DNA in catalysis. Residue Glu3 is the Proton donor of the active site. Residue Lys58 is the Proton donor; for beta-elimination activity of the active site. DNA contacts are provided by His89, Arg107, and Arg144. The FPG-type zinc-finger motif lies at 229–263 (RVYQRTGEPCLNCKTPIRRVIVTQRSSHFCPHCQK). Arg253 functions as the Proton donor; for delta-elimination activity in the catalytic mechanism.

It belongs to the FPG family. As to quaternary structure, monomer. Zn(2+) is required as a cofactor.

The catalysed reaction is Hydrolysis of DNA containing ring-opened 7-methylguanine residues, releasing 2,6-diamino-4-hydroxy-5-(N-methyl)formamidopyrimidine.. It catalyses the reaction 2'-deoxyribonucleotide-(2'-deoxyribose 5'-phosphate)-2'-deoxyribonucleotide-DNA = a 3'-end 2'-deoxyribonucleotide-(2,3-dehydro-2,3-deoxyribose 5'-phosphate)-DNA + a 5'-end 5'-phospho-2'-deoxyribonucleoside-DNA + H(+). Involved in base excision repair of DNA damaged by oxidation or by mutagenic agents. Acts as a DNA glycosylase that recognizes and removes damaged bases. Has a preference for oxidized purines, such as 7,8-dihydro-8-oxoguanine (8-oxoG). Has AP (apurinic/apyrimidinic) lyase activity and introduces nicks in the DNA strand. Cleaves the DNA backbone by beta-delta elimination to generate a single-strand break at the site of the removed base with both 3'- and 5'-phosphates. The protein is Formamidopyrimidine-DNA glycosylase of Solibacter usitatus (strain Ellin6076).